The chain runs to 224 residues: UPF0758 protein Psyr_0222 (224 aa).

Residues 102 to 224 (ALENPTQVRS…PLSMVERGLM (123 aa)) form the MPN domain. Zn(2+)-binding residues include His-173, His-175, and Asp-186. The JAMM motif motif lies at 173–186 (HNHPSGITTPSRSD).

It belongs to the UPF0758 family.

The chain is UPF0758 protein Psyr_0222 from Pseudomonas syringae pv. syringae (strain B728a).